A 204-amino-acid polypeptide reads, in one-letter code: LexA repressor (204 aa).

The segment at residues 29-49 (VREICKGVGLSSTSSVHGHLS) is a DNA-binding region (H-T-H motif). Residues serine 126 and lysine 163 each act as for autocatalytic cleavage activity in the active site.

Belongs to the peptidase S24 family. As to quaternary structure, homodimer.

The catalysed reaction is Hydrolysis of Ala-|-Gly bond in repressor LexA.. Functionally, represses a number of genes involved in the response to DNA damage (SOS response), including recA and lexA. In the presence of single-stranded DNA, RecA interacts with LexA causing an autocatalytic cleavage which disrupts the DNA-binding part of LexA, leading to derepression of the SOS regulon and eventually DNA repair. In Clostridium novyi (strain NT), this protein is LexA repressor.